The chain runs to 300 residues: Ribonuclease HIII (300 aa).

The region spanning 86–300 (RSRIGVDESG…FNEVLGSGNQ (215 aa)) is the RNase H type-2 domain. D92, E93, and D196 together coordinate a divalent metal cation.

It belongs to the RNase HII family. RnhC subfamily. The cofactor is Mn(2+). Requires Mg(2+) as cofactor.

Its subcellular location is the cytoplasm. It carries out the reaction Endonucleolytic cleavage to 5'-phosphomonoester.. Its function is as follows. Endonuclease that specifically degrades the RNA of RNA-DNA hybrids. The chain is Ribonuclease HIII from Chlamydia trachomatis serovar A (strain ATCC VR-571B / DSM 19440 / HAR-13).